We begin with the raw amino-acid sequence, 54 residues long: Large ribosomal subunit protein bL32c (54 aa).

It belongs to the bacterial ribosomal protein bL32 family.

Its subcellular location is the plastid. The protein localises to the chloroplast. This is Large ribosomal subunit protein bL32c from Cucumis sativus (Cucumber).